The chain runs to 511 residues: Probable DNA ligase (511 aa).

An ATP-binding site is contributed by Glu-208. The active-site N6-AMP-lysine intermediate is Lys-210. Arg-215, Arg-230, Glu-259, Phe-299, Arg-377, and Lys-383 together coordinate ATP.

It belongs to the ATP-dependent DNA ligase family. Mg(2+) is required as a cofactor.

It catalyses the reaction ATP + (deoxyribonucleotide)n-3'-hydroxyl + 5'-phospho-(deoxyribonucleotide)m = (deoxyribonucleotide)n+m + AMP + diphosphate.. In terms of biological role, DNA ligase that seals nicks in double-stranded DNA during DNA replication, DNA recombination and DNA repair. The sequence is that of Probable DNA ligase from Streptomyces griseus subsp. griseus (strain JCM 4626 / CBS 651.72 / NBRC 13350 / KCC S-0626 / ISP 5235).